Here is a 477-residue protein sequence, read N- to C-terminus: Putative multidrug resistance protein MdtD (477 aa).

The next 14 membrane-spanning stretches (helical) occupy residues 13–33 (LWIV…VNTA), 50–70 (SVIV…GWLA), 73–93 (VGVQ…SILC), 107–127 (VVQG…VMKI), 139–159 (FVTL…GFLV), 166–186 (WIFL…LLLM), 196–216 (FDIS…LALD), 220–240 (GMGL…AALA), 268–288 (LTAS…TPLF), 291–311 (VGMG…IIGS), 326–348 (GYRN…FPLV), 352–374 (GWIW…RFSA), 394–414 (LLSM…GILI), and 432–452 (AFIY…LAFA).

The protein belongs to the major facilitator superfamily. TCR/Tet family.

Its subcellular location is the cell inner membrane. The polypeptide is Putative multidrug resistance protein MdtD (Serratia proteamaculans (strain 568)).